The chain runs to 109 residues: FK506-binding protein (109 aa).

The region spanning 20–108 (GKEITVHYTG…IFEVELLKVY (89 aa)) is the PPIase FKBP-type domain.

The protein belongs to the FKBP-type PPIase family.

It catalyses the reaction [protein]-peptidylproline (omega=180) = [protein]-peptidylproline (omega=0). In terms of biological role, PPIases accelerate the folding of proteins. The sequence is that of FK506-binding protein (fbp) from Neisseria meningitidis serogroup C.